The sequence spans 390 residues: Nucleosome assembly protein 1-like 1 (390 aa).

A compositionally biased stretch (basic and acidic residues) spans 1 to 10; sequence MADIDNKEQS. The disordered stretch occupies residues 1–32; the sequence is MADIDNKEQSELDQDLEDVEEVEEEETGEETK. The residue at position 2 (A2) is an N-acetylalanine. Residue S10 is modified to Phosphoserine. Positions 11–28 are enriched in acidic residues; the sequence is ELDQDLEDVEEVEEEETG. A phosphothreonine mark is found at T62 and T64. S69 is subject to Phosphoserine. At K116 the chain carries N6-acetyllysine. The NAP1L motif signature appears at 125–150; that stretch reads YEPTEEECEWKPDEEDEVSEELKEKA. The segment covering 131-143 has biased composition (acidic residues); it reads ECEWKPDEEDEVS. Positions 131–163 are disordered; it reads ECEWKPDEEDEVSEELKEKAKIEDEKKDEEKED. A Phosphoserine modification is found at S143. Positions 144–163 are enriched in basic and acidic residues; sequence EELKEKAKIEDEKKDEEKED. Positions 272–278 match the Nuclear localization signal motif; sequence IKKKQKH. Positions 345-375 are enriched in acidic residues; the sequence is AIEDDDDDYDEEGEEADEEGEEEGDEENDPD. The interval 345-390 is disordered; it reads AIEDDDDDYDEEGEEADEEGEEEGDEENDPDYDPKKDQNPAECKQQ. A 5-glutamyl polyglycine mark is found at E358 and E359. A compositionally biased stretch (basic and acidic residues) spans 376-390; it reads YDPKKDQNPAECKQQ. C387 carries the cysteine methyl ester modification. C387 carries the S-farnesyl cysteine lipid modification. The propeptide at 388 to 390 is removed in mature form; that stretch reads KQQ.

Belongs to the nucleosome assembly protein (NAP) family. As to quaternary structure, homodimer. The dimer binds strongly and sequentially to single and double H2A-H2B heterodimers. Interacts with ERCC6; this interaction increases ERCC6 processivity. Interacts with RAD54. Interacts with SETD1A. In terms of processing, polyglycylated by TTLL10 on glutamate residues, resulting in polyglycine chains on the gamma-carboxyl group. Both polyglutamylation and polyglycylation modifications can coexist on the same protein on adjacent residues, and lowering polyglycylation levels increases polyglutamylation, and reciprocally. Post-translationally, polyglutamylated by TTLL4 on glutamate residues, resulting in polyglutamate chains on the gamma-carboxyl group. Both polyglutamylation and polyglycylation modifications can coexist on the same protein on adjacent residues, and lowering polyglycylation levels increases polyglutamylation, and reciprocally.

It localises to the nucleus. It is found in the melanosome. The protein localises to the cytoplasm. Histone chaperone that plays a role in the nuclear import of H2A-H2B and nucleosome assembly. Also participates in several important DNA repair mechanisms: greatly enhances ERCC6-mediated chromatin remodeling which is essential for transcription-coupled nucleotide excision DNA repair. Also stimulates homologous recombination (HR) by RAD51 and RAD54 which is essential in mitotic DNA double strand break (DSB) repair. Plays a key role in the regulation of embryonic neurogenesis. Promotes the proliferation of neural progenitors and inhibits neuronal differentiation during cortical development. Regulates neurogenesis via the modulation of RASSF10; regulates RASSF10 expression by promoting SETD1A-mediated H3K4 methylation at the RASSF10 promoter. The sequence is that of Nucleosome assembly protein 1-like 1 (Nap1l1) from Rattus norvegicus (Rat).